A 197-amino-acid polypeptide reads, in one-letter code: MADRIASVERNTLETQIKVSINLDGTGKFNCVTGVPFLDHMLEQVARHGLIDLDIHAVGDLHIDAHHTVEDLGITLGQAFDIAVGDKKGIKRYGHAYVPLDEALSRVVIDFSGRPGLEMHVPFARASVGGFDVDLFSEFFHGFINHAKVTLHLDNLRGKNTHHQAETIFKAFGRALRMALEADERMAGQMPSTKGSL.

The protein belongs to the imidazoleglycerol-phosphate dehydratase family.

It localises to the cytoplasm. The catalysed reaction is D-erythro-1-(imidazol-4-yl)glycerol 3-phosphate = 3-(imidazol-4-yl)-2-oxopropyl phosphate + H2O. Its pathway is amino-acid biosynthesis; L-histidine biosynthesis; L-histidine from 5-phospho-alpha-D-ribose 1-diphosphate: step 6/9. The polypeptide is Imidazoleglycerol-phosphate dehydratase (Marinomonas sp. (strain MWYL1)).